The following is a 321-amino-acid chain: uncharacterized protein (321 aa).

Helical transmembrane passes span 12–32, 52–72, 86–106, 109–129, 136–156, 168–188, 214–234, 254–274, and 292–312; these read IGVE…WAAT, LITS…AFLV, ILMS…ILII, LTGL…QQWF, FVIS…LVLA, DSLS…LFVG, WGMI…FTFL, KEIP…GLFF, and IFIC…QIFA.

It is found in the cell membrane. This is an uncharacterized protein from Campylobacter jejuni subsp. jejuni serotype O:2 (strain ATCC 700819 / NCTC 11168).